The chain runs to 268 residues: F-actin-capping protein subunit alpha (268 aa).

Ser2 carries the post-translational modification N-acetylserine. Ser17 is subject to Phosphoserine.

This sequence belongs to the F-actin-capping protein alpha subunit family. In terms of assembly, component of the F-actin capping complex, composed of a heterodimer of an alpha and a beta subunit. Interacts with BSP1 (via C-terminus); leading to recruitment of the F-actin capping complex to actin cortical patches and the acomyosin contractile ring.

It is found in the cytoplasm. The protein resides in the cytoskeleton. Its subcellular location is the actin patch. Its function is as follows. F-actin-capping proteins bind in a Ca(2+)-independent manner to the fast growing ends of actin filaments (barbed end) thereby blocking the exchange of subunits at these ends. Unlike other capping proteins (such as gelsolin and severin), these proteins do not sever actin filaments. The protein is F-actin-capping protein subunit alpha (CAP1) of Saccharomyces cerevisiae (strain ATCC 204508 / S288c) (Baker's yeast).